Reading from the N-terminus, the 876-residue chain is Valine--tRNA ligase (876 aa).

Residues 43–53 (PNVTGVLHMGH) carry the 'HIGH' region motif. A 'KMSKS' region motif is present at residues 534 to 538 (KMSKS). Lys537 lines the ATP pocket. Positions 847 to 876 (PEKVVAIEKAKKADAEAKIEALKASLKSLS) form a coiled coil.

It belongs to the class-I aminoacyl-tRNA synthetase family. ValS type 1 subfamily. Monomer.

The protein resides in the cytoplasm. It catalyses the reaction tRNA(Val) + L-valine + ATP = L-valyl-tRNA(Val) + AMP + diphosphate. In terms of biological role, catalyzes the attachment of valine to tRNA(Val). As ValRS can inadvertently accommodate and process structurally similar amino acids such as threonine, to avoid such errors, it has a 'posttransfer' editing activity that hydrolyzes mischarged Thr-tRNA(Val) in a tRNA-dependent manner. This is Valine--tRNA ligase from Christiangramia forsetii (strain DSM 17595 / CGMCC 1.15422 / KT0803) (Gramella forsetii).